The following is an 879-amino-acid chain: Alanine--tRNA ligase (879 aa).

Positions 570, 574, 672, and 676 each coordinate Zn(2+).

Belongs to the class-II aminoacyl-tRNA synthetase family. It depends on Zn(2+) as a cofactor.

Its subcellular location is the cytoplasm. The catalysed reaction is tRNA(Ala) + L-alanine + ATP = L-alanyl-tRNA(Ala) + AMP + diphosphate. Catalyzes the attachment of alanine to tRNA(Ala) in a two-step reaction: alanine is first activated by ATP to form Ala-AMP and then transferred to the acceptor end of tRNA(Ala). Also edits incorrectly charged Ser-tRNA(Ala) and Gly-tRNA(Ala) via its editing domain. The polypeptide is Alanine--tRNA ligase (Nitratidesulfovibrio vulgaris (strain ATCC 29579 / DSM 644 / CCUG 34227 / NCIMB 8303 / VKM B-1760 / Hildenborough) (Desulfovibrio vulgaris)).